The following is a 460-amino-acid chain: Chromosomal replication initiator protein DnaA (460 aa).

The segment at Met-1–Ala-84 is domain I, interacts with DnaA modulators. The segment at Ala-84–Ser-123 is domain II. The disordered stretch occupies residues Lys-103–Ser-123. The segment at Asn-124–Ala-340 is domain III, AAA+ region. The ATP site is built by Gly-168, Gly-170, Lys-171, and Thr-172. Residues Asn-341–Ser-460 are domain IV, binds dsDNA.

It belongs to the DnaA family. Oligomerizes as a right-handed, spiral filament on DNA at oriC.

The protein localises to the cytoplasm. Functionally, plays an essential role in the initiation and regulation of chromosomal replication. ATP-DnaA binds to the origin of replication (oriC) to initiate formation of the DNA replication initiation complex once per cell cycle. Binds the DnaA box (a 9 base pair repeat at the origin) and separates the double-stranded (ds)DNA. Forms a right-handed helical filament on oriC DNA; dsDNA binds to the exterior of the filament while single-stranded (ss)DNA is stabiized in the filament's interior. The ATP-DnaA-oriC complex binds and stabilizes one strand of the AT-rich DNA unwinding element (DUE), permitting loading of DNA polymerase. After initiation quickly degrades to an ADP-DnaA complex that is not apt for DNA replication. Binds acidic phospholipids. This chain is Chromosomal replication initiator protein DnaA, found in Shewanella sp. (strain MR-4).